We begin with the raw amino-acid sequence, 431 residues long: uncharacterized protein (431 aa).

Disordered stretches follow at residues 31 to 55, 257 to 291, and 365 to 431; these read VPASRIPEGGNVSASQPNGAHQAGV, QNGGRLSVSKDSDVYPTNGYGNGNQNRQNRSPKQD, and FQSP…HRKA. Positions 42–55 are enriched in polar residues; it reads VSASQPNGAHQAGV. The segment covering 412–425 has biased composition (basic and acidic residues); it reads VEYRRGRSLRESRE.

This is an uncharacterized protein from Arabidopsis thaliana (Mouse-ear cress).